The chain runs to 238 residues: MGRKWANIVAKKTAKDGATSKVYAKFGVEIYAAAKQGEPDPESNSSLKFVIERAKQAQVPKHVIDKAIDKAKGGGDETFVQGRYEGFGPNGSMVIAETLTSNVNRTIANVRTTFHKNGGNIGAAGAVSYMFDNTGVIVFEGTDPDHIFEILLDAEVDVRDVTEEEGNIVVYTEPTDLHKGIAALKEAGITEFSTTELEMIPQSEVELSPEDLEIFEGLIDALEDDDDVQKVYHNVANL.

The protein belongs to the TACO1 family. YeeN subfamily.

The protein localises to the cytoplasm. The polypeptide is Probable transcriptional regulatory protein YcdB (ycdB) (Lactococcus lactis subsp. lactis (strain IL1403) (Streptococcus lactis)).